Here is a 207-residue protein sequence, read N- to C-terminus: Glycerol-3-phosphate acyltransferase (207 aa).

A run of 5 helical transmembrane segments spans residues valine 4 to valine 24, isoleucine 58 to leucine 78, aspartate 86 to histidine 106, isoleucine 120 to alanine 140, and valine 162 to isoleucine 182.

This sequence belongs to the PlsY family. Probably interacts with PlsX.

It localises to the cell inner membrane. It catalyses the reaction an acyl phosphate + sn-glycerol 3-phosphate = a 1-acyl-sn-glycero-3-phosphate + phosphate. The protein operates within lipid metabolism; phospholipid metabolism. In terms of biological role, catalyzes the transfer of an acyl group from acyl-phosphate (acyl-PO(4)) to glycerol-3-phosphate (G3P) to form lysophosphatidic acid (LPA). This enzyme utilizes acyl-phosphate as fatty acyl donor, but not acyl-CoA or acyl-ACP. This Ralstonia nicotianae (strain ATCC BAA-1114 / GMI1000) (Ralstonia solanacearum) protein is Glycerol-3-phosphate acyltransferase.